The chain runs to 3411 residues: Genome polyprotein (3411 aa).

The Cytoplasmic segment spans residues 1 to 104 (MSGRKAQGKT…LSSRKRRSHD (104 aa)). The interval 38–72 (PGPSRGVQGFIFFFLFNILTGKKITAHLKRLWKML) is hydrophobic; homodimerization of capsid protein C. The propeptide at 102–121 (SHDVLTVQFLILGMLLMTGG) is ER anchor for the capsid protein C, removed in mature form by serine protease NS3. Residues 105-125 (VLTVQFLILGMLLMTGGVTLV) traverse the membrane as a helical segment. The Extracellular portion of the chain corresponds to 126-244 (RKNRWLLLNV…GERQLQKIER (119 aa)). Asn-134 and Asn-150 each carry an N-linked (GlcNAc...) asparagine; by host glycan. The chain crosses the membrane as a helical span at residues 245–265 (WLVRNPFFAVTALTIAYLVGS). At 266–270 (NMTQR) the chain is on the cytoplasmic side. Residues 271–285 (VVIALLVLAVGPAYS) traverse the membrane as a helical segment. At 286-730 (AHCIGITDRD…TVFGSAFQGL (445 aa)) the chain is on the extracellular side. Disulfide bonds link Cys-288–Cys-315, Cys-345–Cys-401, Cys-345–Cys-406, Cys-359–Cys-390, Cys-377–Cys-401, Cys-377–Cys-406, Cys-467–Cys-568, and Cys-585–Cys-615. Positions 383–396 (DRGWGNGCGLFGKG) are fusion peptide. The helical transmembrane segment at 731–751 (FGGLNWITKVIMGAVLIWVGI) threads the bilayer. At 752-757 (NTRNMT) the chain is on the extracellular side. The chain crosses the membrane as a helical span at residues 758 to 778 (MSMSMILVGVIMMFLSLGVGA). Topologically, residues 779-1132 (DQGCAINFGK…LVRSWVTAGE (354 aa)) are extracellular. 6 disulfides stabilise this stretch: Cys-782–Cys-793, Cys-833–Cys-921, Cys-957–Cys-1002, Cys-1058–Cys-1107, Cys-1069–Cys-1091, and Cys-1090–Cys-1094. N-linked (GlcNAc...) asparagine; by host glycans are attached at residues Asn-908 and Asn-986. The chain crosses the membrane as a helical span at residues 1133–1153 (IHAVPFGLVSMMIAMEVVLRK). At 1154–1201 (RQGPKQMLVGGVVLLGAMLVGQVTLLDLLKLTVAVGLHFHEMNNGGDA) the chain is on the cytoplasmic side. The chain crosses the membrane as a helical span at residues 1202–1222 (MYMALIAAFSIRPGLLIGFGL). Residues 1223 to 1287 (RTLWSPRERL…ILPLMALLTP (65 aa)) are Lumenal-facing. Residues 1288-1308 (VTMAEVRLATMLFCTVVIIGV) form a helical membrane-spanning segment. Over 1309–1355 (LHQNSKDTSMQKTIPLVALTLTSYLGLTQPFLGLCAFLATRIFGRRS) the chain is Cytoplasmic. The helical transmembrane segment at 1356–1376 (IPVNEALAAAGLVGVLAGLAF) threads the bilayer. The Lumenal portion of the chain corresponds to 1377 to 1378 (QE). The chain crosses the membrane as a helical span at residues 1379–1399 (MENFLGPIAVGGILMMLVSVA). The Cytoplasmic portion of the chain corresponds to 1400 to 1456 (GRVDGLELKKLGEVSWEEEAEISGSSARYDVALSEQGEFKLLSEEKVPWDQVVMTSL). The segment at 1407 to 1446 (LKKLGEVSWEEEAEISGSSARYDVALSEQGEFKLLSEEKV) is interacts with and activates NS3 protease. The segment at residues 1457–1477 (ALVGAAIHPFALLLVLAGWLF) is an intramembrane region (helical). Topologically, residues 1478–2157 (HVRGARRSGD…RNALSMMPEA (680 aa)) are cytoplasmic. In terms of domain architecture, Peptidase S7 spans 1485 to 1665 (SGDVLWDIPT…EVKEEGKEEL (181 aa)). Residues His-1537, Asp-1561, and Ser-1622 each act as charge relay system; for serine protease NS3 activity in the active site. The Helicase ATP-binding domain occupies 1669 to 1825 (PTMLKKGMTT…HSNGEIEDVQ (157 aa)). The tract at residues 1673 to 1676 (KKGM) is important for RNA-binding. 1682 to 1689 (FHPGAGKT) contacts ATP. Residues 1773 to 1776 (DEAH) carry the DEAH box motif. A Helicase C-terminal domain is found at 1820–1997 (EIEDVQTDIP…VRGGMVAPLY (178 aa)). Lys-1877 is subject to N6-acetyllysine; by host. The disordered stretch occupies residues 1942–1961 (AAQRRGRIGRNPNRDGDSYY). A helical transmembrane segment spans residues 2158–2178 (MTIVMLFILAGLLTSGMVIFF). The Lumenal portion of the chain corresponds to 2179–2186 (MSPKGISR). The segment at residues 2187–2207 (MSMAMGTMAGCGYLMFLGGVK) is an intramembrane region (helical). At 2208–2209 (PT) the chain is on the lumenal side. Residues 2210–2230 (HISYIMLIFFVLMVVVIPEPG) traverse the membrane as a helical segment. Residues 2231–2241 (QQRSIQDNQVA) are Cytoplasmic-facing. Residues 2242–2262 (YLIIGILTLVSVVAANELGML) form a helical membrane-spanning segment. Over 2263-2293 (EKTKEDLFGKKNLIPSSASPWSWPDLDLKPG) the chain is Lumenal. An intramembrane region (helical) is located at residues 2294-2314 (AAWTVYVGIVTMLSPMLHHWI). At 2315–2360 (KVEYGNLSLSGIAQSASVLSFMDKGIPFMKMNISVIILLVSGWNSI) the chain is on the lumenal side. A helical transmembrane segment spans residues 2361–2380 (TVMPLLCGIGCAMLHWSLIL). Residues 2381-2421 (PGIKAQQSKLAQRRVFHGVAKNPVVDGNPTVDIEEAPEMPA) are Cytoplasmic-facing. Residues 2422-2442 (LYEKKLALYLLLALSLASVAM) form a helical membrane-spanning segment. The Lumenal portion of the chain corresponds to 2443 to 2445 (CRT). A helical membrane pass occupies residues 2446-2466 (PFSLAEGIVLASAALGPLIEG). At 2467-3411 (NTSLLWNGPM…DADLQPGELI (945 aa)) the chain is on the cytoplasmic side. An mRNA cap 0-1 NS5-type MT domain is found at 2507 to 2771 (GSANGKTLGE…DVILPIGTRS (265 aa)). Ser-2562 is a binding site for S-adenosyl-L-methionine. Ser-2562 carries the phosphoserine modification. The active-site For 2'-O-MTase activity is the Lys-2567. Positions 2592, 2593, 2610, 2611, 2637, and 2638 each coordinate S-adenosyl-L-methionine. The active-site For 2'-O-MTase activity is Asp-2652. Position 2653 (Ile-2653) interacts with S-adenosyl-L-methionine. Active-site for 2'-O-MTase activity residues include Lys-2688 and Glu-2724. Residue Tyr-2726 participates in S-adenosyl-L-methionine binding. Positions 2878–2911 (RKIMKVVNRWLFRHLAREKNPRLCTKEEFIAKVR) match the Nuclear localization signal motif. Residues Glu-2945, His-2949, Cys-2954, and Cys-2957 each coordinate Zn(2+). The RdRp catalytic domain occupies 3035–3187 (GGFYADDTAG…RPIDDRFGLA (153 aa)). Residues His-3222, Cys-3238, and Cys-3357 each contribute to the Zn(2+) site.

It in the N-terminal section; belongs to the class I-like SAM-binding methyltransferase superfamily. mRNA cap 0-1 NS5-type methyltransferase family. As to quaternary structure, homodimer. Interacts (via N-terminus) with host EXOC1 (via C-terminus); this interaction results in EXOC1 degradation through the proteasome degradation pathway. In terms of assembly, forms heterodimers with envelope protein E in the endoplasmic reticulum and Golgi. Homodimer; in the endoplasmic reticulum and Golgi. Interacts with protein prM. Interacts with non-structural protein 1. As to quaternary structure, homodimer; Homohexamer when secreted. Interacts with envelope protein E. NS1 interacts with NS4B. Interacts with host complement protein CFH; this interaction leads to the degradation of C3. In terms of assembly, interacts (via N-terminus) with serine protease NS3. Forms a heterodimer with serine protease NS3. May form homooligomers. As to quaternary structure, forms a heterodimer with NS2B. Interacts with non-structural protein 2A (via N-terminus). Interacts with NS4B. Interacts with unphosphorylated RNA-directed RNA polymerase NS5; this interaction stimulates RNA-directed RNA polymerase NS5 guanylyltransferase activity. NS3 interacts with host PDCD6IP; this interaction contributes to virion release. In terms of assembly, interacts with serine protease NS3. Homodimer. Interacts with host STAT2; this interaction prevents the establishment of cellular antiviral state. Interacts with serine protease NS3. Interacts with host TRIM23; this interaction leads to NS5 ubiquitination. Post-translationally, specific enzymatic cleavages in vivo yield mature proteins. The nascent capsid protein C contains a C-terminal hydrophobic domain that act as a signal sequence for translocation of prM into the lumen of the ER. Mature capsid protein C is cleaved at a site upstream of this hydrophobic domain by NS3. prM is cleaved in post-Golgi vesicles by a host furin, releasing the mature small envelope protein M, and peptide pr. Non-structural protein 2A-alpha, a C-terminally truncated form of non-structural protein 2A, results from partial cleavage by NS3. Specific enzymatic cleavages in vivo yield mature proteins peptide 2K acts as a signal sequence and is removed from the N-terminus of NS4B by the host signal peptidase in the ER lumen. Signal cleavage at the 2K-4B site requires a prior NS3 protease-mediated cleavage at the 4A-2K site. Cleaved in post-Golgi vesicles by a host furin, releasing the mature small envelope protein M, and peptide pr. This cleavage is incomplete as up to 30% of viral particles still carry uncleaved prM. In terms of processing, N-glycosylated. Post-translationally, N-glycosylated. The excreted form is glycosylated and this is required for efficient secretion of the protein from infected cells. Polyubiquitinated; ubiquitination is probably mediated by host TRIM23 and is prerequisite for NS5-STAT2 interaction. NS5 is not ISGylated or sumoylated. In terms of processing, acetylated by host KAT5. Acetylation modulates NS3 RNA-binding and unwinding activities and plays an important positive role for viral replication. Post-translationally, phosphorylated on serines residues. This phosphorylation may trigger NS5 nuclear localization.

Its subcellular location is the virion. It is found in the host nucleus. The protein localises to the host cytoplasm. It localises to the host perinuclear region. The protein resides in the secreted. Its subcellular location is the virion membrane. It is found in the host endoplasmic reticulum membrane. It catalyses the reaction Selective hydrolysis of -Xaa-Xaa-|-Yaa- bonds in which each of the Xaa can be either Arg or Lys and Yaa can be either Ser or Ala.. The catalysed reaction is RNA(n) + a ribonucleoside 5'-triphosphate = RNA(n+1) + diphosphate. The enzyme catalyses a ribonucleoside 5'-triphosphate + H2O = a ribonucleoside 5'-diphosphate + phosphate + H(+). It carries out the reaction ATP + H2O = ADP + phosphate + H(+). It catalyses the reaction a 5'-end (5'-triphosphoguanosine)-ribonucleoside in mRNA + S-adenosyl-L-methionine = a 5'-end (N(7)-methyl 5'-triphosphoguanosine)-ribonucleoside in mRNA + S-adenosyl-L-homocysteine. The catalysed reaction is a 5'-end (N(7)-methyl 5'-triphosphoguanosine)-ribonucleoside in mRNA + S-adenosyl-L-methionine = a 5'-end (N(7)-methyl 5'-triphosphoguanosine)-(2'-O-methyl-ribonucleoside) in mRNA + S-adenosyl-L-homocysteine + H(+). Functionally, plays a role in virus budding by binding to the cell membrane and gathering the viral RNA into a nucleocapsid that forms the core of a mature virus particle. During virus entry, may induce genome penetration into the host cytoplasm after hemifusion induced by the surface proteins. Can migrate to the cell nucleus where it modulates host functions. Inhibits RNA silencing by interfering with host Dicer. Its function is as follows. Prevents premature fusion activity of envelope proteins in trans-Golgi by binding to envelope protein E at pH6.0. After virion release in extracellular space, gets dissociated from E dimers. In terms of biological role, acts as a chaperone for envelope protein E during intracellular virion assembly by masking and inactivating envelope protein E fusion peptide. prM is the only viral peptide matured by host furin in the trans-Golgi network probably to avoid catastrophic activation of the viral fusion activity in acidic Golgi compartment prior to virion release. prM-E cleavage is inefficient, and many virions are only partially matured. These uncleaved prM would play a role in immune evasion. Functionally, may play a role in virus budding. Exerts cytotoxic effects by activating a mitochondrial apoptotic pathway through M ectodomain. May display a viroporin activity. Binds to host cell surface receptor and mediates fusion between viral and cellular membranes. Envelope protein is synthesized in the endoplasmic reticulum in the form of heterodimer with protein prM. They play a role in virion budding in the ER, and the newly formed immature particle is covered with 60 spikes composed of heterodimer between precursor prM and envelope protein E. The virion is transported to the Golgi apparatus where the low pH causes dissociation of PrM-E heterodimers and formation of E homodimers. prM-E cleavage is inefficient, and many virions are only partially matured. These uncleaved prM would play a role in immune evasion. Its function is as follows. Involved in immune evasion, pathogenesis and viral replication. Once cleaved off the polyprotein, is targeted to three destinations: the viral replication cycle, the plasma membrane and the extracellular compartment. Essential for viral replication. Required for formation of the replication complex and recruitment of other non-structural proteins to the ER-derived membrane structures. Excreted as a hexameric lipoparticle that plays a role against host immune response. Antagonizing the complement function. Binds to the host macrophages and dendritic cells. Inhibits signal transduction originating from Toll-like receptor 3 (TLR3). In terms of biological role, component of the viral RNA replication complex that functions in virion assembly and antagonizes the host immune response. Functionally, required cofactor for the serine protease function of NS3. May have membrane-destabilizing activity and form viroporins. Displays three enzymatic activities: serine protease, NTPase and RNA helicase. NS3 serine protease, in association with NS2B, performs its autocleavage and cleaves the polyprotein at dibasic sites in the cytoplasm: C-prM, NS2A-NS2B, NS2B-NS3, NS3-NS4A, NS4A-2K and NS4B-NS5. NS3 RNA helicase binds RNA and unwinds dsRNA in the 3' to 5' direction. Also plays a role in virus assembly. Its function is as follows. Regulates the ATPase activity of the NS3 helicase activity. NS4A allows NS3 helicase to conserve energy during unwinding. In terms of biological role, functions as a signal peptide for NS4B and is required for the interferon antagonism activity of the latter. Functionally, induces the formation of ER-derived membrane vesicles where the viral replication takes place. Inhibits interferon (IFN)-induced host STAT1 phosphorylation and nuclear translocation, thereby preventing the establishment of cellular antiviral state by blocking the IFN-alpha/beta pathway. Replicates the viral (+) and (-) RNA genome, and performs the capping of genomes in the cytoplasm. NS5 methylates viral RNA cap at guanine N-7 and ribose 2'-O positions. Besides its role in RNA genome replication, also prevents the establishment of cellular antiviral state by blocking the interferon-alpha/beta (IFN-alpha/beta) signaling pathway. IFN-I induces binding of NS5 to host IFN-activated transcription factor STAT2, preventing its transcriptional activity. Host TRIM23 is the E3 ligase that interacts with and polyubiquitinates NS5 to promote its binding to STAT2 and trigger IFN-I signaling inhibition. The polypeptide is Genome polyprotein (Yellow fever virus (strain Ghana/Asibi/1927) (YFV)).